Reading from the N-terminus, the 340-residue chain is Protein-arginine kinase (340 aa).

The Phosphagen kinase C-terminal domain occupies Val21–Ala242. Residues Ser24–Arg28, His79, Arg113, Arg164–Met168, and Arg195–Glu200 contribute to the ATP site.

Belongs to the ATP:guanido phosphotransferase family.

It carries out the reaction L-arginyl-[protein] + ATP = N(omega)-phospho-L-arginyl-[protein] + ADP + H(+). In terms of biological role, catalyzes the specific phosphorylation of arginine residues in proteins. The polypeptide is Protein-arginine kinase (Listeria monocytogenes serotype 4b (strain CLIP80459)).